A 52-amino-acid chain; its full sequence is Insulin (52 aa).

Intrachain disulfides connect C7/C38, C19/C51, and C37/C42.

It belongs to the insulin family. In terms of assembly, heterodimer of a B chain and an A chain linked by two disulfide bonds.

The protein resides in the secreted. Insulin decreases blood glucose concentration. It increases cell permeability to monosaccharides, amino acids and fatty acids. It accelerates glycolysis, the pentose phosphate cycle, and glycogen synthesis in liver. The protein is Insulin (ins) of Atractosteus spatula (Alligator gar).